Consider the following 490-residue polypeptide: MTENNEHLALWGGRFTSGPSPELARLSKSTQFDWRLADDDIAGSRAHARALGRAGLLTADELQRMEDALDTLQRHVDDGSFAPIEDDEDEATALERGLIDIAGDELGGKLRAGRSRNDQIACLIRMWLRRHSRAIAGLLLDLVNALIEQSEKAGRTVMPGRTHMQHAQPVLLAHQLMAHAWPLIRDVQRLIDWDKRINASPYGSGALAGNTLGLDPEAVARELGFSRVTDNSIDGTAARDLVAEFAFVAAMTGVDISRLSEEIIIWNTQEFAFVKLDDGYSTGSSIMPQKKNPDIAELARGKSGRLIGDLTGLLSTLKGLPTAYARDLQEDKEAVFDQVDTLEVLLPAFTGMVKTMHFDGDRLEEEAPTGFALATDIAEWLVKNGVPFRHAHELSGACVKLAEGRGQELWDLTDNDFIETFAAFLPADKAPGVREVLSSHGSVDSRNGKGGTAYGRVREQIADAKAEVEELKLFPASTSDGSAYKAPGTF.

This sequence belongs to the lyase 1 family. Argininosuccinate lyase subfamily.

The protein localises to the cytoplasm. It catalyses the reaction 2-(N(omega)-L-arginino)succinate = fumarate + L-arginine. The protein operates within amino-acid biosynthesis; L-arginine biosynthesis; L-arginine from L-ornithine and carbamoyl phosphate: step 3/3. This Bifidobacterium longum subsp. infantis (strain ATCC 15697 / DSM 20088 / JCM 1222 / NCTC 11817 / S12) protein is Argininosuccinate lyase.